We begin with the raw amino-acid sequence, 158 residues long: Ribosome maturation factor RimP (158 aa).

Belongs to the RimP family.

It localises to the cytoplasm. Its function is as follows. Required for maturation of 30S ribosomal subunits. The protein is Ribosome maturation factor RimP of Leuconostoc citreum (strain KM20).